The following is a 400-amino-acid chain: Nicotinate phosphoribosyltransferase (400 aa).

Position 220 is a phosphohistidine; by autocatalysis (H220).

The protein belongs to the NAPRTase family. In terms of processing, transiently phosphorylated on a His residue during the reaction cycle. Phosphorylation strongly increases the affinity for substrates and increases the rate of nicotinate D-ribonucleotide production. Dephosphorylation regenerates the low-affinity form of the enzyme, leading to product release.

It carries out the reaction nicotinate + 5-phospho-alpha-D-ribose 1-diphosphate + ATP + H2O = nicotinate beta-D-ribonucleotide + ADP + phosphate + diphosphate. It functions in the pathway cofactor biosynthesis; NAD(+) biosynthesis; nicotinate D-ribonucleotide from nicotinate: step 1/1. Functionally, catalyzes the synthesis of beta-nicotinate D-ribonucleotide from nicotinate and 5-phospho-D-ribose 1-phosphate at the expense of ATP. The protein is Nicotinate phosphoribosyltransferase of Salmonella schwarzengrund (strain CVM19633).